Reading from the N-terminus, the 38-residue chain is Photosystem I reaction center subunit IX (38 aa).

The helical transmembrane segment at 6–26 (YLSTAPVVATLWLFLTAGILI) threads the bilayer.

Belongs to the PsaJ family.

It is found in the plastid. The protein localises to the chloroplast thylakoid membrane. May help in the organization of the PsaE and PsaF subunits. This is Photosystem I reaction center subunit IX from Cyanidioschyzon merolae (strain NIES-3377 / 10D) (Unicellular red alga).